The primary structure comprises 316 residues: MDKENFTRLRGELFCDHPLARYTSWRVGGKAERFYRPADLFDLQDFLTQLPSDEPLTWLGLGSNVLIRDGGIKGTVILTLNRLKELSVVNSQLVFREKSGTEDFFSGNGKTIIRAEAGVTCAKLAKFCVSQGLEDGAFFAGIPGTVGGALAMNAGAFGGETWRTVIGVETMNHQGEILKRTPDEFKIHYRQVEGLENQFFIAGYFCFNHGDPDKAKTAINALLKKRNLSQPIGKYSCGSVFRNPPGDYAARLIESAGLKGKSIGNAEVSEKHANFILNKGNASAADIEALIHYVAQHVSQIHGIQLVKEVNIIGRS.

The region spanning 27–225 is the FAD-binding PCMH-type domain; sequence VGGKAERFYR…KTAINALLKK (199 aa). Arg190 is a catalytic residue. Catalysis depends on Ser239, which acts as the Proton donor. Glu309 is an active-site residue.

Belongs to the MurB family. FAD is required as a cofactor.

Its subcellular location is the cytoplasm. The catalysed reaction is UDP-N-acetyl-alpha-D-muramate + NADP(+) = UDP-N-acetyl-3-O-(1-carboxyvinyl)-alpha-D-glucosamine + NADPH + H(+). Its pathway is cell wall biogenesis; peptidoglycan biosynthesis. Its function is as follows. Cell wall formation. In Coxiella burnetii (strain CbuG_Q212) (Coxiella burnetii (strain Q212)), this protein is UDP-N-acetylenolpyruvoylglucosamine reductase.